A 644-amino-acid polypeptide reads, in one-letter code: ATP-dependent zinc metalloprotease FtsH (644 aa).

The Stromal portion of the chain corresponds to 1–11; that stretch reads MNDNKNNTVRN. The helical transmembrane segment at 12–32 threads the bilayer; sequence LLIGIALLSGISLTAKKFDLI. At 33–128 the chain is on the lumenal side; sequence GVQGSESGKN…FDAHPAEQKN (96 aa). A helical transmembrane segment spans residues 129 to 149; the sequence is IFVNILSNILLPIIFITGLVY. Over 150 to 644 the chain is Stromal; the sequence is LFQNSENFGG…KNIPYVSKFN (495 aa). 226-233 contributes to the ATP binding site; that stretch reads GPPGTGKT. Histidine 447 is a binding site for Zn(2+). The active site involves glutamate 448. Residues histidine 451 and aspartate 525 each coordinate Zn(2+).

The protein in the central section; belongs to the AAA ATPase family. It in the C-terminal section; belongs to the peptidase M41 family. In terms of assembly, homohexamer. Requires Zn(2+) as cofactor.

Its subcellular location is the plastid. The protein resides in the chloroplast thylakoid membrane. Functionally, acts as a processive, ATP-dependent zinc metallopeptidase. The chain is ATP-dependent zinc metalloprotease FtsH from Trieres chinensis (Marine centric diatom).